The chain runs to 194 residues: Large ribosomal subunit protein uL18 (194 aa).

The protein belongs to the universal ribosomal protein uL18 family. In terms of assembly, part of the 50S ribosomal subunit. Contacts the 5S and 23S rRNAs.

This is one of the proteins that bind and probably mediate the attachment of the 5S RNA into the large ribosomal subunit, where it forms part of the central protuberance. This is Large ribosomal subunit protein uL18 from Methanococcus aeolicus (strain ATCC BAA-1280 / DSM 17508 / OCM 812 / Nankai-3).